Here is an 89-residue protein sequence, read N- to C-terminus: 10 kDa fusion protein (89 aa).

A disordered region spans residues M1–P29. Positions L9 to G22 are enriched in polar residues. N-linked (GlcNAc...) asparagine; by host glycosylation is present at N18.

Belongs to the poxviruses fusion protein family. As to quaternary structure, homotrimer, covalently linked.

The protein localises to the virion membrane. This Capra hircus (Goat) protein is 10 kDa fusion protein.